Reading from the N-terminus, the 175-residue chain is Transcriptional repressor NrdR (175 aa).

Residues 3–34 (CPICQDTNSRVLESRSAESGKSIRRRRECMNC) fold into a zinc finger. The ATP-cone domain maps to 49 to 139 (ITIIKRDGKK…VYRKFQGIRD (91 aa)).

It belongs to the NrdR family. Zn(2+) is required as a cofactor.

In terms of biological role, negatively regulates transcription of bacterial ribonucleotide reductase nrd genes and operons by binding to NrdR-boxes. This chain is Transcriptional repressor NrdR, found in Trichodesmium erythraeum (strain IMS101).